A 355-amino-acid chain; its full sequence is Probable nitronate monooxygenase (355 aa).

FMN-binding positions include N71, Q175, G180, G218, and 237–240 (QMGT).

Belongs to the nitronate monooxygenase family. NMO class I subfamily. FMN is required as a cofactor.

It carries out the reaction 3 propionate 3-nitronate + 3 O2 + H2O = 3 3-oxopropanoate + 2 nitrate + nitrite + H2O2 + 3 H(+). Nitronate monooxygenase that uses molecular oxygen to catalyze the oxidative denitrification of alkyl nitronates. Acts on propionate 3-nitronate (P3N), the presumed physiological substrate. Probably functions in the detoxification of P3N, a metabolic poison produced by plants and fungi as a defense mechanism. This chain is Probable nitronate monooxygenase, found in Staphylococcus aureus (strain MSSA476).